Here is a 2590-residue protein sequence, read N- to C-terminus: DNA polymerase theta (2590 aa).

Basic residues predominate over residues 1-12 (MNLLRRSGKRRR). The tract at residues 1 to 33 (MNLLRRSGKRRRSESGSDSFSGSGGDSSASPQF) is disordered. Residues 16–30 (GSDSFSGSGGDSSAS) show a composition bias toward low complexity. ATP is bound by residues glutamine 96 and 115-122 (APTSAGKT). A Helicase ATP-binding domain is found at 102 to 286 (LGQVLEGKNL…WLNAELYHTD (185 aa)). The helicase activity stretch occupies residues 102 to 554 (LGQVLEGKNL…STSQDMHTYA (453 aa)). The DEAH box signature appears at 216 to 219 (DELH). A Helicase C-terminal domain is found at 321–554 (GDEDHVVSLC…STSQDMHTYA (234 aa)). The tract at residues 847 to 894 (DEEEEAVEERRNMRTIWVTGRKGLTEREAAALIVEEARMILQQDLVEM) is interaction with RAD51. The residue at position 990 (lysine 990) is an N6-acetyllysine. The tract at residues 1034–1060 (KMSRSFRSWKRRKHLKRSRDSSPLKDS) is disordered. Over residues 1040-1050 (RSWKRRKHLKR) the composition is skewed to basic residues. A phosphoserine; by PLK1 mark is found at serine 1289, serine 1482, serine 1486, serine 1488, serine 1493, serine 1555, and serine 1563. A disordered region spans residues 1594 to 1622 (SDPVLDEHHQGDQDGGDQDERAEKSKLTG). Residues 1598 to 1619 (LDEHHQGDQDGGDQDERAEKSK) are compositionally biased toward basic and acidic residues. A phosphoserine; by PLK1 mark is found at serine 1628 and serine 1635. Threonine 1755 is modified (phosphothreonine; by PLK1). Positions 1777–1797 (PSDIKNHDLSPGSRNGFKDNS) are disordered. The interval 2097-2584 (AECESQKHIM…KVKIGASWGE (488 aa)) is DNA polymerase activity. Loop stretches follow at residues 2142-2177 (KLPP…GRQF) and 2257-2322 (EIKM…VPFP). Mg(2+) contacts are provided by aspartate 2330 and tyrosine 2331. The loop 3 stretch occupies residues 2491 to 2535 (QLETFHSTFKSHGHREGMLQSDQTGLSRKRKLQGMFCPIRGGFFI). Aspartate 2540 contacts Mg(2+).

Belongs to the DNA polymerase type-A family. As to quaternary structure, homomultimer; forms homodimers and homotetramers. Interacts with RAD51. Interacts with ORC2 and ORC4. Interacts with RHNO1; interaction takes place during mitosis and promotes POLQ recruitment to DNA damage sites. Interacts (when phosphorylated) with TOPBP1 (via BRCT domains 7 and 8); promoting POLQ recruitment to DNA damage sites. It depends on Mg(2+) as a cofactor. In terms of processing, phosphorylated by PLK1; promoting interaction with TOPBP1 and recruitment to DNA damage sites. Highly expressed in testis.

The protein resides in the nucleus. It localises to the chromosome. The catalysed reaction is DNA(n) + a 2'-deoxyribonucleoside 5'-triphosphate = DNA(n+1) + diphosphate. The enzyme catalyses ATP + H2O = ADP + phosphate + H(+). With respect to regulation, specifically inhibited by the antibiotic novobiocin. The polymerase activity is specifically inhibited by the small molecule ART558. Novobiocin and ART558 confer specific killing of BRCA1/2-deficient cells and synergize with the poly [ADP-ribose] polymerase (PARP) inhibitor olaparib. Functionally, low-fidelity DNA polymerase with a helicase activity that promotes microhomology-mediated end-joining (MMEJ), an alternative non-homologous end-joining (NHEJ) machinery required to repair double-strand breaks in DNA during mitosis. MMEJ is an error-prone repair pathway that produces deletions of sequences from the strand being repaired and promotes genomic rearrangements, such as telomere fusions, some of them leading to cellular transformation. MMEJ is required during mitosis to repair persistent double-strand breaks that originate in S-phase. Although error-prone, MMEJ protects against chromosomal instability and tumorigenesis. The polymerase acts by binding directly the 2 ends of resected double-strand breaks, allowing microhomologous sequences in the overhangs to form base pairs. It then extends each strand from the base-paired region using the opposing overhang as a template. Requires partially resected DNA containing 2 to 6 base pairs of microhomology to perform MMEJ. The polymerase lacks proofreading activity and is highly promiscuous: unlike most polymerases, promotes extension of ssDNA and partial ssDNA (pssDNA) substrates. When the ends of a break do not contain terminal microhomology must identify embedded complementary sequences through a scanning step. Also acts as a DNA helicase, promoting dissociation of the replication protein A complex (RPA/RP-A), composed of RPA1, RPA2 and RPA3, from resected double-strand breaks to allow their annealing and subsequent joining by MMEJ. Removal of RPA/RP-A complex proteins prevents RAD51 accumulation at resected ends, thereby inhibiting homology-recombination repair (HR) pathway. Also shows RNA-directed DNA polymerase activity to mediate DNA repair in vitro; however this activity needs additional evidence in vivo. May also have lyase activity. Involved in somatic hypermutation of immunoglobulin genes, a process that requires the activity of DNA polymerases to ultimately introduce mutations at both A/T and C/G base pairs. POLQ-mediated end joining activity is involved in random integration of exogenous DNA hampers. This is DNA polymerase theta from Homo sapiens (Human).